The primary structure comprises 385 residues: Pre-mRNA-splicing factor slt-11 (385 aa).

The segment at 157–233 (RKGREVDEEG…PPGPKDWLPP (77 aa)) is disordered. A compositionally biased stretch (low complexity) spans 171–187 (GSSSGAGRATGGNPAVG). Positions 239–312 (MSLFVTGIED…CPLRVRWSVP (74 aa)) constitute an RRM domain. Residues 320–331 (KEQRSEMLRDGR) are compositionally biased toward basic and acidic residues. The segment at 320 to 370 (KEQRSEMLRDGRSAFGSGQKTGGQKAIGGQNAQGGASGAQKDDASNLTIAA) is disordered.

The protein belongs to the SLT11 family. As to quaternary structure, associated with the spliceosome.

The protein resides in the nucleus. Involved in pre-mRNA splicing. Facilitates the cooperative formation of U2/U6 helix II in association with stem II in the spliceosome. Binds to RNA. The sequence is that of Pre-mRNA-splicing factor slt-11 (slt-11) from Neurospora crassa (strain ATCC 24698 / 74-OR23-1A / CBS 708.71 / DSM 1257 / FGSC 987).